Consider the following 65-residue polypeptide: Large ribosomal subunit protein bL35c (65 aa).

The protein belongs to the bacterial ribosomal protein bL35 family.

Its subcellular location is the plastid. It localises to the cyanelle. The polypeptide is Large ribosomal subunit protein bL35c (rpl35) (Cyanophora paradoxa).